Consider the following 576-residue polypeptide: Arginine--tRNA ligase (576 aa).

The short motif at Pro-122–His-132 is the 'HIGH' region element.

This sequence belongs to the class-I aminoacyl-tRNA synthetase family. As to quaternary structure, monomer.

Its subcellular location is the cytoplasm. It carries out the reaction tRNA(Arg) + L-arginine + ATP = L-arginyl-tRNA(Arg) + AMP + diphosphate. This chain is Arginine--tRNA ligase, found in Yersinia pseudotuberculosis serotype IB (strain PB1/+).